The sequence spans 433 residues: MAATAHGLCEFIDASPSPFHVCATVAGRLLGAGYRELREADRWPDKPGRYFTVRAGSLVAWNAEQSGHTQVPFRIVGAHTDSPNLRVKQHPDRLVAGWHVVALQPYGGVWLHSWLDRDLGISGRLSVRDGTGVSHRLVRIDDPILRVPQLAIHLAEDRKSLTLDPQRHINAVWGVGERVESFVGYVAQRAGVAAADVLAADLMTHDLTPSALIGASVNGTASLLSAPRLDNQASCYAGMEALLAVDVDSASSGFVPVLAIFDHEEVGSASGHGAQSDLLSSVLERIVLAAGGTREDFLRRLTTSMLASADMAHATHPNYPDRHEPSHPIEVNAGPVLKVHPNLRYATDGRTAAAFALACQRAGVPMQRYEHRADLPCGSTIGPLAAARTGIPTVDVGAAQLAMHSARELMGAHDVAAYSAALQAFLSAELSEA.

Residues histidine 79, histidine 153, and histidine 404 each coordinate Zn(2+).

Belongs to the peptidase M18 family. Zn(2+) is required as a cofactor.

The sequence is that of Probable M18 family aminopeptidase 2 (apeB) from Mycobacterium bovis (strain ATCC BAA-935 / AF2122/97).